A 1630-amino-acid chain; its full sequence is Transient receptor potential cation channel subfamily M member 1 (1630 aa).

Disordered stretches follow at residues 1–25, 65–92, 453–492, 620–643, and 824–858; these read MGSMRKMSSSFKRGSIKSSTSGSQK, PLPSVTPSSTAEDTKQGDAQSGKWSVSK, APPVDTKVAEKEKKPPTATTKGRGKGKGKKKGKVKEEVEE, LGMEDDEPPAKGKKKKKKKKEEEI, and SKENEDGKEKEEENVDANADAGSRKGDEENEHKKQ. Residues 1–877 lie on the Cytoplasmic side of the membrane; sequence MGSMRKMSSS…CEFYNAPIVK (877 aa). Over residues 8–25 the composition is skewed to low complexity; the sequence is SSSFKRGSIKSSTSGSQK. The segment covering 69 to 92 has biased composition (polar residues); it reads VTPSSTAEDTKQGDAQSGKWSVSK. Residues 474-485 show a composition bias toward basic residues; that stretch reads GRGKGKGKKKGK. 2 stretches are compositionally biased toward basic and acidic residues: residues 825-834 and 845-855; these read KENEDGKEKE and GSRKGDEENEH. The chain crosses the membrane as a helical span at residues 878–898; it reads FWFYTISYLGYLLLFNYVILV. Residues 899-944 lie on the Extracellular side of the membrane; that stretch reads RMDGWPSPQEWIVISYIVSLALEKIREILMSEPGKLSQKIKVWLQE. The helical transmembrane segment at 945–965 threads the bilayer; that stretch reads YWNITDLVAISMFMVGAILRL. Residues 966–975 are Cytoplasmic-facing; that stretch reads QNQPYMGYGR. The chain crosses the membrane as a helical span at residues 976–996; it reads VIYCVDIILWYIRVLDIFGVN. Over 997–1008 the chain is Extracellular; the sequence is KYLGPYVMMIGK. Residues 1009 to 1029 traverse the membrane as a helical segment; it reads MMIDMLYFVVIMLVVLMSFGV. The Cytoplasmic segment spans residues 1030-1107; sequence ARQAILHPEE…CIPGAWLTPA (78 aa). Residues 1108–1128 traverse the membrane as a helical segment; it reads LMACYLLVANILLVNLLIAVF. The N-linked (GlcNAc...) asparagine glycan is linked to Asn1129. The Extracellular portion of the chain corresponds to 1129–1158; sequence NNTFFEVKSISNQVWKFQRYQLIMTFHDRP. The helical transmembrane segment at 1159–1179 threads the bilayer; the sequence is VLPPPMIILSHIYIIVMRLSG. The Cytoplasmic portion of the chain corresponds to 1180–1630; it reads RCRKKREGDQ…QEKGNPETEC (451 aa). Residues 1235–1255 are a coiled coil; it reads IRVTSERVENMSMRLEEINER. 2 disordered regions span residues 1362–1414 and 1575–1630; these read EDVK…AGEL and CLRS…ETEC.

This sequence belongs to the transient receptor (TC 1.A.4) family. LTrpC subfamily. TRPM1 sub-subfamily. In terms of assembly, interacts with TRPM3; the interaction results in the formation of a heteromultimeric cation channel complex that are functionally different from the homomeric channels. Interacts with GPR179. Associates with both guanine nucleotide-binding proteins G(o) and beta-gamma G protein dimer; implicated in directly regulating TRPM1 channel open-state.

The protein resides in the cell membrane. The protein localises to the endoplasmic reticulum membrane. Its subcellular location is the cell projection. It localises to the axon. The catalysed reaction is Ca(2+)(in) = Ca(2+)(out). It carries out the reaction Mg(2+)(in) = Mg(2+)(out). The enzyme catalyses Mn(2+)(in) = Mn(2+)(out). It catalyses the reaction Ni(2+)(in) = Ni(2+)(out). With respect to regulation, inhibited by extracellular zinc ions. Inhibited by intracellular Mg(2+). Activated by the neuroactive steroid pregnenolone sulfate. Negatively regulated by activation of GRM6 receptors in the ON-bipolar cells. In terms of biological role, constitutively open nonselective divalent cation-conducting channels which mediate the influx of Ca(2+), Mg(2+), Mn(2+), Ba(2+), and Ni(2+) into the cytoplasm, leading to membrane depolarization. Impermeable to zinc ions. In addition, forms heteromultimeric ion channels with TRPM3 which are permeable for calcium and zinc ions. Plays an essential role for the depolarizing photoresponse of retinal ON bipolar cells. In the dark, tonic release of glutamate activates the G-protein coupled receptor for glutamate GRM6, its activation induces the release of G(o) protein and the beta-gamma G protein dimer. Both subunits can interact and inactivate the TRPM1 channel. A light onset, induces decrease in glutamate release and deactivation of GRM6 leading to channel opening and membrane depolarization. May play a role in metastasis suppression. The polypeptide is Transient receptor potential cation channel subfamily M member 1 (Rattus norvegicus (Rat)).